The primary structure comprises 463 residues: uncharacterized protein (463 aa).

Transmembrane regions (helical) follow at residues 6-26, 31-51, 60-80, 101-123, 130-152, 189-209, 242-262, 269-289, 304-324, 413-433, and 443-463; these read ILPV…FMLL, TFIS…SLSA, FIYA…IVSM, VRGP…LFFW, LIGA…AAMA, ASIP…FIMI, SILA…MLLF, ATAL…FFVY, GFKF…FFYL, AIWV…AAIC, and KNFI…VMML.

The protein resides in the cell membrane. This is an uncharacterized protein from Bacillus subtilis (strain 168).